We begin with the raw amino-acid sequence, 271 residues long: Putative phosphoenolpyruvate synthase regulatory protein (271 aa).

Position 151–158 (glycine 151–threonine 158) interacts with ADP.

The protein belongs to the pyruvate, phosphate/water dikinase regulatory protein family. PSRP subfamily.

The enzyme catalyses [pyruvate, water dikinase] + ADP = [pyruvate, water dikinase]-phosphate + AMP + H(+). It catalyses the reaction [pyruvate, water dikinase]-phosphate + phosphate + H(+) = [pyruvate, water dikinase] + diphosphate. Its function is as follows. Bifunctional serine/threonine kinase and phosphorylase involved in the regulation of the phosphoenolpyruvate synthase (PEPS) by catalyzing its phosphorylation/dephosphorylation. The polypeptide is Putative phosphoenolpyruvate synthase regulatory protein (Burkholderia thailandensis (strain ATCC 700388 / DSM 13276 / CCUG 48851 / CIP 106301 / E264)).